The following is a 375-amino-acid chain: Proclotting enzyme (375 aa).

The signal sequence occupies residues 1–21 (MLVNNVFSLLCFPLLMSVVRC). Residues 22 to 27 (STLSRQ) constitute a propeptide that is removed on maturation. Gln-30 bears the Pyrrolidone carboxylic acid mark. One can recognise a Clip domain in the interval 39–84 (LCSNRFTEEGTCKNVLDCRILLQKNDYNLLKESICGFEGITPKVCC). 3 disulfides stabilise this stretch: Cys-40-Cys-83, Cys-50-Cys-73, and Cys-56-Cys-84. The tract at residues 90–113 (VISSTQAPPETTTTERPPKQIPPN) is disordered. 4 disulfides stabilise this stretch: Cys-118–Cys-248, Cys-157–Cys-173, Cys-295–Cys-311, and Cys-322–Cys-351. N-linked (GlcNAc...) asparagine glycosylation is present at Asn-122. One can recognise a Peptidase S1 domain in the interval 128-375 (IIGGREAPIG…FLDWIAEHMV (248 aa)). His-172 serves as the catalytic Charge relay system. Ca(2+) contacts are provided by Glu-194, Asn-196, Ser-199, and Asp-202. The active-site Charge relay system is Asp-228. Residues Asn-235 and Asn-304 are each glycosylated (N-linked (GlcNAc...) asparagine). The Charge relay system role is filled by Ser-326.

This sequence belongs to the peptidase S1 family. CLIP subfamily. As to quaternary structure, in the active form, heterodimer of a light chain and a heavy chain; disulfide-linked. Forms a covalent heterodimer with intracellular coagulation inhibitor 2/LICI-2. Proteolytically cleaved into its mature active form by serine protease factor B. Cleavage produces a 25 kDa light chain containing the CLIP domain and a catalytic 31 kDa heavy chain which remain covalently associated through an interchain disulfide bond. Proteolytically cleaved by clotting factor G subunit beta. Post-translationally, contains six O-linked carbohydrate chains in the N-terminal light chain. As to expression, expressed in hemocytes (at protein level).

The protein resides in the cytoplasmic vesicle. It localises to the secretory vesicle. Its subcellular location is the secreted. It carries out the reaction Selective cleavage of 18-Arg-|- and 47-Arg-|- bonds in coagulogen to form coagulin and fragments.. Its activity is regulated as follows. Inhibited by intracellular coagulation inhibitor 2/LICI-2 and to a lesser extent by intracellular coagulation inhibitor 3/LICI-3. Functionally, this enzyme is closely associated with an endotoxin-sensitive hemolymph coagulation system in limulus. Its active form catalyzes the conversion of coagulogen to insoluble coagulin gel. The chain is Proclotting enzyme from Tachypleus tridentatus (Japanese horseshoe crab).